A 178-amino-acid polypeptide reads, in one-letter code: CASP-like protein 5A1 (178 aa).

Residues 1-11 are compositionally biased toward low complexity; sequence MFASRPAVHPV. A disordered region spans residues 1–25; the sequence is MFASRPAVHPVEAPPPPDPAEQPRG. Residues 1-37 are Cytoplasmic-facing; sequence MFASRPAVHPVEAPPPPDPAEQPRGVLMKDLPGMPGT. A helical membrane pass occupies residues 38 to 58; it reads AGGLGLRLAQFAFAAVALAVM. At 59–69 the chain is on the extracellular side; that stretch reads ASTNDFPSVTS. The helical transmembrane segment at 70-90 threads the bilayer; that stretch reads FCFLVAAAILQCLWSFSLAIV. The Cytoplasmic segment spans residues 91 to 105; it reads DIYALLVKRCLRNRR. A helical membrane pass occupies residues 106-126; that stretch reads AVCLFAIGDGITAALTFSAAC. Topologically, residues 127–152 are extracellular; the sequence is ASSGITVLIDNDLDLCSENHCASFES. A helical transmembrane segment spans residues 153-173; sequence ATAMAFLSWFALSPSFLLNFW. The Cytoplasmic segment spans residues 174 to 178; it reads SMASG.

It belongs to the Casparian strip membrane proteins (CASP) family. Homodimer and heterodimers.

Its subcellular location is the cell membrane. This Oryza sativa subsp. japonica (Rice) protein is CASP-like protein 5A1.